The sequence spans 230 residues: Ion-translocating oxidoreductase complex subunit E (230 aa).

6 helical membrane passes run 18-38 (ALVQ…ATNA), 39-59 (LGLG…VSAL), 63-83 (TPAE…VSAV), 86-106 (LINA…PLIV), 125-145 (WLSA…MFVL), and 182-202 (PFLL…MLAV).

It belongs to the NqrDE/RnfAE family. The complex is composed of six subunits: RsxA, RsxB, RsxC, RsxD, RsxE and RsxG.

Its subcellular location is the cell inner membrane. In terms of biological role, part of a membrane-bound complex that couples electron transfer with translocation of ions across the membrane. Required to maintain the reduced state of SoxR. The chain is Ion-translocating oxidoreductase complex subunit E from Salmonella agona (strain SL483).